A 420-amino-acid chain; its full sequence is MIOREX complex component 9 (420 aa).

2 helical membrane-spanning segments follow: residues 125–145 (VYKVSPFFIIFATASIFTFIL) and 149–169 (IVVIPLIFHFFFPLLIMFFFF).

In terms of assembly, associates with the mitochondrial ribosome.

It is found in the mitochondrion. The protein resides in the mitochondrion membrane. Component of MIOREX complexes, large expressome-like assemblies of ribosomes with factors involved in all the steps of post-transcriptional gene expression. In Saccharomyces cerevisiae (strain ATCC 204508 / S288c) (Baker's yeast), this protein is MIOREX complex component 9.